Consider the following 102-residue polypeptide: Large ribosomal subunit protein bL21 (102 aa).

It belongs to the bacterial ribosomal protein bL21 family. In terms of assembly, part of the 50S ribosomal subunit. Contacts protein L20.

Functionally, this protein binds to 23S rRNA in the presence of protein L20. The polypeptide is Large ribosomal subunit protein bL21 (Nitratiruptor sp. (strain SB155-2)).